Here is a 241-residue protein sequence, read N- to C-terminus: Carboxy-S-adenosyl-L-methionine synthase (241 aa).

S-adenosyl-L-methionine is bound by residues Y38, 63–65 (GCS), 88–89 (DN), 116–117 (DI), N131, and R198.

This sequence belongs to the class I-like SAM-binding methyltransferase superfamily. Cx-SAM synthase family. Homodimer.

It carries out the reaction prephenate + S-adenosyl-L-methionine = carboxy-S-adenosyl-L-methionine + 3-phenylpyruvate + H2O. Catalyzes the conversion of S-adenosyl-L-methionine (SAM) to carboxy-S-adenosyl-L-methionine (Cx-SAM). This Haemophilus influenzae (strain ATCC 51907 / DSM 11121 / KW20 / Rd) protein is Carboxy-S-adenosyl-L-methionine synthase.